A 386-amino-acid polypeptide reads, in one-letter code: MSMLLYYFASAVKSIQFHVDDDIIDKLNYYYTTAIITVFAILVSAKQYVGFPIQCWVPATFTEPMEQYTENYCWVQNTYFLPLHDYIPHNYAERENRQIGYYQWVPFVLALEALLFYVPTIVWRLLSWQSGIHVQSLVQMACDSRLLDLESRNRALQTIATNVEEALHVKHQVMSGNRLKLLNLIICTRSSGAAVTFLYISVKILYTVNIVGQIFLLNTFLGNRSKWYGLQVLNDLMNGREWEESGHFPRVTLCDFEVKVLGNVHRHTVQCVLMINMFNEKIFLFLWFWYFLLAGATLCSLFYWIYISVVPSRQLNFVGKYLTGIEGYKMVDSQSLRRFVFHFLRQDGVFLLRMVATHAGELPCYELAKTLWNNYCDNKEGKMHDV.

Transmembrane regions (helical) follow at residues 33–53, 103–123, 197–217, and 282–302; these read TAII…GFPI, QWVP…TIVW, FLYI…IFLL, and IFLF…CSLF.

Belongs to the pannexin family. Heterooligomer of unc-7 and unc-9. Interacts with F-actin. In terms of tissue distribution, expressed in PLM neurons (at protein level). Expressed in the nerve ring.

The protein localises to the cell membrane. It is found in the cell junction. It localises to the gap junction. Its function is as follows. Structural component of gap junctions. Plays a role in maintaining gap junction activity to promote locomotion. This is Innexin unc-9 from Caenorhabditis elegans.